Consider the following 154-residue polypeptide: 6,7-dimethyl-8-ribityllumazine synthase (154 aa).

5-amino-6-(D-ribitylamino)uracil is bound by residues phenylalanine 23, 57–59 (AFE), and 81–83 (AVI). 86-87 (ST) serves as a coordination point for (2S)-2-hydroxy-3-oxobutyl phosphate. Histidine 89 (proton donor) is an active-site residue. 5-amino-6-(D-ribitylamino)uracil is bound at residue phenylalanine 114. Arginine 128 contributes to the (2S)-2-hydroxy-3-oxobutyl phosphate binding site.

The protein belongs to the DMRL synthase family.

It carries out the reaction (2S)-2-hydroxy-3-oxobutyl phosphate + 5-amino-6-(D-ribitylamino)uracil = 6,7-dimethyl-8-(1-D-ribityl)lumazine + phosphate + 2 H2O + H(+). It participates in cofactor biosynthesis; riboflavin biosynthesis; riboflavin from 2-hydroxy-3-oxobutyl phosphate and 5-amino-6-(D-ribitylamino)uracil: step 1/2. Catalyzes the formation of 6,7-dimethyl-8-ribityllumazine by condensation of 5-amino-6-(D-ribitylamino)uracil with 3,4-dihydroxy-2-butanone 4-phosphate. This is the penultimate step in the biosynthesis of riboflavin. This chain is 6,7-dimethyl-8-ribityllumazine synthase, found in Syntrophotalea carbinolica (strain DSM 2380 / NBRC 103641 / GraBd1) (Pelobacter carbinolicus).